A 424-amino-acid chain; its full sequence is UPF0597 protein Sputcn32_1209 (424 aa).

Belongs to the UPF0597 family.

The sequence is that of UPF0597 protein Sputcn32_1209 from Shewanella putrefaciens (strain CN-32 / ATCC BAA-453).